The primary structure comprises 204 residues: Ras-related protein Rab-7L1 (204 aa).

The GTP site is built by serine 33, lysine 34, histidine 35, tyrosine 36, lysine 37, and threonine 39. An Effector region motif is present at residues 36-44 (YKSTVGVDF). Threonine 71 bears the Phosphothreonine; by LRRK2 mark. At serine 72 the chain carries Phosphoserine. Residues lysine 126, valine 156, and lysine 157 each contribute to the GTP site. S-geranylgeranyl cysteine attachment occurs at residues cysteine 203 and cysteine 204.

It belongs to the small GTPase superfamily. Rab family. Interacts with LRRK2 (via the N-terminus); this interaction is direct and stimulates kinase activity. Expressed predominantly in kidney and much less in brain, heart, muscle, fat, liver, spleen, adrenal gland, ovary, thymus and lung. Not expressed in testis and intestine.

The protein resides in the cell membrane. It localises to the cytoplasm. Its subcellular location is the perinuclear region. It is found in the golgi apparatus. The protein localises to the golgi apparatus membrane. The protein resides in the trans-Golgi network. It localises to the cytoskeleton. The small GTPases Rab are key regulators in vesicle trafficking. Essential for maintaining the integrity of endosome-trans-Golgi network structure. Together with LRRK2, plays a role in the retrograde trafficking pathway for recycling proteins, such as mannose 6 phosphate receptor (M6PR), between lysosomes and the Golgi apparatus in a retromer-dependent manner. Recruits LRRK2 to the Golgi apparatus and stimulates LRRK2 kinase activity. Stimulates phosphorylation of RAB10 'Thr-73' by LRRK2. Regulates also neuronal process morphology in the intact central nervous system (CNS). The sequence is that of Ras-related protein Rab-7L1 (Rab29) from Rattus norvegicus (Rat).